The following is a 294-amino-acid chain: Release factor glutamine methyltransferase (294 aa).

Residues Gly-131–Gly-135, Asp-154, and Asn-202 contribute to the S-adenosyl-L-methionine site. Substrate is bound at residue Asn-202–Tyr-205.

Belongs to the protein N5-glutamine methyltransferase family. PrmC subfamily.

The enzyme catalyses L-glutaminyl-[peptide chain release factor] + S-adenosyl-L-methionine = N(5)-methyl-L-glutaminyl-[peptide chain release factor] + S-adenosyl-L-homocysteine + H(+). Its function is as follows. Methylates the class 1 translation termination release factors RF1/PrfA and RF2/PrfB on the glutamine residue of the universally conserved GGQ motif. In Chlorobaculum tepidum (strain ATCC 49652 / DSM 12025 / NBRC 103806 / TLS) (Chlorobium tepidum), this protein is Release factor glutamine methyltransferase.